We begin with the raw amino-acid sequence, 207 residues long: 3-isopropylmalate dehydratase small subunit (207 aa).

Belongs to the LeuD family. LeuD type 1 subfamily. Heterodimer of LeuC and LeuD.

The catalysed reaction is (2R,3S)-3-isopropylmalate = (2S)-2-isopropylmalate. It participates in amino-acid biosynthesis; L-leucine biosynthesis; L-leucine from 3-methyl-2-oxobutanoate: step 2/4. Functionally, catalyzes the isomerization between 2-isopropylmalate and 3-isopropylmalate, via the formation of 2-isopropylmaleate. The chain is 3-isopropylmalate dehydratase small subunit from Gluconacetobacter diazotrophicus (strain ATCC 49037 / DSM 5601 / CCUG 37298 / CIP 103539 / LMG 7603 / PAl5).